Here is a 79-residue protein sequence, read N- to C-terminus: Methionine-rich peptide X (79 aa).

Residues 1-22 (MKKLAAVMLTSCLMVAVGASFA) form the signal peptide. Residues 37–79 (KKDDMAKDEMKKDSMAKDGMKKDAMKKDAMMKKDGMTKDEMKK) are disordered.

Protein is oxidized (possibly on Met residues) when cells are exposed to chlorite or hypochlorite; initially the protein is highly oxidized, by 50 minutes all protein is in the reduced form.

Its subcellular location is the periplasm. In terms of biological role, serves as an oxidative stress sink, specifically for chlorite and hypochlorite. In Azospira oryzae (strain ATCC BAA-33 / DSM 13638 / PS) (Dechlorosoma suillum), this protein is Methionine-rich peptide X.